The sequence spans 63 residues: U-reduvitoxin-Pr4a (63 aa).

Residues 1–19 (MKIFGLFLLIATYMALAFA) form the signal peptide. 3 disulfides stabilise this stretch: Cys-24–Cys-40, Cys-31–Cys-45, and Cys-39–Cys-52.

This sequence belongs to the venom Ptu1-like knottin family. As to expression, expressed by the venom gland.

It is found in the secreted. Functionally, binds reversibly and blocks P/Q-type voltage-gated calcium channels (Cav). The sequence is that of U-reduvitoxin-Pr4a from Platymeris rhadamanthus (Red spot assassin bug).